Consider the following 307-residue polypeptide: Methionyl-tRNA formyltransferase (307 aa).

Residue 108–111 (SLLP) coordinates (6S)-5,6,7,8-tetrahydrofolate.

This sequence belongs to the Fmt family.

It catalyses the reaction L-methionyl-tRNA(fMet) + (6R)-10-formyltetrahydrofolate = N-formyl-L-methionyl-tRNA(fMet) + (6S)-5,6,7,8-tetrahydrofolate + H(+). Functionally, attaches a formyl group to the free amino group of methionyl-tRNA(fMet). The formyl group appears to play a dual role in the initiator identity of N-formylmethionyl-tRNA by promoting its recognition by IF2 and preventing the misappropriation of this tRNA by the elongation apparatus. In Xanthomonas axonopodis pv. citri (strain 306), this protein is Methionyl-tRNA formyltransferase.